The primary structure comprises 446 residues: Phosphoglucosamine mutase (446 aa).

The active-site Phosphoserine intermediate is the Ser-100. Mg(2+)-binding residues include Ser-100, Asp-241, Asp-243, and Asp-245. Phosphoserine is present on Ser-100.

The protein belongs to the phosphohexose mutase family. It depends on Mg(2+) as a cofactor. In terms of processing, activated by phosphorylation.

The catalysed reaction is alpha-D-glucosamine 1-phosphate = D-glucosamine 6-phosphate. In terms of biological role, catalyzes the conversion of glucosamine-6-phosphate to glucosamine-1-phosphate. The sequence is that of Phosphoglucosamine mutase from Methylorubrum extorquens (strain CM4 / NCIMB 13688) (Methylobacterium extorquens).